The chain runs to 223 residues: NLP effector protein 2 (223 aa).

The Conserved undecapeptide motif motif lies at 90–100 (AIMYSWYFPKD). The short motif at 107 to 113 (GHRHDWE) is the Conserved p motif element.

This sequence belongs to the Necrosis inducing protein (NPP1) family.

The protein resides in the secreted. It is found in the host cytoplasm. In terms of biological role, probable secreted effector that may act as a pathogen-associated molecular pattern (PAMP) recognized by the plant immune system. Seems not to induce necrosis, neither in several susceptible or resistant Vitis species nor in the dicot model plant Nicotiana benthamiana. The protein is NLP effector protein 2 of Plasmopara viticola (Downy mildew of grapevine).